Consider the following 212-residue polypeptide: Urease accessory protein UreG (212 aa).

11–18 (GPVGSGKT) serves as a coordination point for GTP.

It belongs to the SIMIBI class G3E GTPase family. UreG subfamily. As to quaternary structure, homodimer. UreD, UreF and UreG form a complex that acts as a GTP-hydrolysis-dependent molecular chaperone, activating the urease apoprotein by helping to assemble the nickel containing metallocenter of UreC. The UreE protein probably delivers the nickel.

Its subcellular location is the cytoplasm. Functionally, facilitates the functional incorporation of the urease nickel metallocenter. This process requires GTP hydrolysis, probably effectuated by UreG. The chain is Urease accessory protein UreG from Trichodesmium erythraeum (strain IMS101).